The sequence spans 208 residues: Interferon epsilon (208 aa).

Residues 1 to 21 form the signal peptide; the sequence is MIIKHFFGTVLVLLASTTIFS. C53 and C163 are oxidised to a cystine. Residues N95 and N104 are each glycosylated (N-linked (GlcNAc...) asparagine).

The protein belongs to the alpha/beta interferon family. Endometrium-specific.

The protein resides in the secreted. Functionally, type I interferon required for maintaining basal levels of IFN-regulated genes, including 2'-5'-oligoadenylate synthetase, IRF7 and ISG15, in the female reproductive tract. Directly mediates protection against viral and bacterial genital infections. The polypeptide is Interferon epsilon (IFNE) (Homo sapiens (Human)).